The chain runs to 165 residues: Endoribonuclease YbeY (165 aa).

Residues histidine 131, histidine 135, and histidine 141 each coordinate Zn(2+).

Belongs to the endoribonuclease YbeY family. The cofactor is Zn(2+).

It is found in the cytoplasm. Functionally, single strand-specific metallo-endoribonuclease involved in late-stage 70S ribosome quality control and in maturation of the 3' terminus of the 16S rRNA. The protein is Endoribonuclease YbeY of Lachnoclostridium phytofermentans (strain ATCC 700394 / DSM 18823 / ISDg) (Clostridium phytofermentans).